We begin with the raw amino-acid sequence, 341 residues long: UDP-3-O-acylglucosamine N-acyltransferase (341 aa).

The active-site Proton acceptor is the His-241.

It belongs to the transferase hexapeptide repeat family. LpxD subfamily. In terms of assembly, homotrimer.

It catalyses the reaction a UDP-3-O-[(3R)-3-hydroxyacyl]-alpha-D-glucosamine + a (3R)-hydroxyacyl-[ACP] = a UDP-2-N,3-O-bis[(3R)-3-hydroxyacyl]-alpha-D-glucosamine + holo-[ACP] + H(+). It functions in the pathway bacterial outer membrane biogenesis; LPS lipid A biosynthesis. Functionally, catalyzes the N-acylation of UDP-3-O-acylglucosamine using 3-hydroxyacyl-ACP as the acyl donor. Is involved in the biosynthesis of lipid A, a phosphorylated glycolipid that anchors the lipopolysaccharide to the outer membrane of the cell. This chain is UDP-3-O-acylglucosamine N-acyltransferase, found in Histophilus somni (strain 129Pt) (Haemophilus somnus).